The chain runs to 151 residues: UPF0756 membrane protein Hore_21770 (151 aa).

The next 5 helical transmembrane spans lie at 7 to 29 (LLII…GLLL), 49 to 69 (IEIG…LSPV), 84 to 104 (TVAI…LDLL), 110 to 130 (FILG…GIPV), and 131 to 151 (GPLM…IIKG).

Belongs to the UPF0756 family.

The protein resides in the cell membrane. This is UPF0756 membrane protein Hore_21770 from Halothermothrix orenii (strain H 168 / OCM 544 / DSM 9562).